Here is a 336-residue protein sequence, read N- to C-terminus: N-lysine methyltransferase KMT5A (336 aa).

A disordered region spans residues 1-112; it reads MGRGKKMSKP…KPSEQRETEC (112 aa). Residues 67–93 show a composition bias toward basic and acidic residues; sequence SVAHHESKCPGKPLTETRKKAEVEKKR. The 122-residue stretch at 200 to 321 folds into the SET domain; that stretch reads EGMKMDMITG…VGEELLYDYG (122 aa). S-adenosyl-L-methionine-binding positions include 210 to 212, Y255, and 282 to 283; these read KGR and NH.

It belongs to the class V-like SAM-binding methyltransferase superfamily. Histone-lysine methyltransferase family. PR/SET subfamily.

The protein localises to the nucleus. It localises to the chromosome. The enzyme catalyses L-lysyl(20)-[histone H4] + S-adenosyl-L-methionine = N(6)-methyl-L-lysyl(20)-[histone H4] + S-adenosyl-L-homocysteine + H(+). It catalyses the reaction L-lysyl-[protein] + S-adenosyl-L-methionine = N(6)-methyl-L-lysyl-[protein] + S-adenosyl-L-homocysteine + H(+). Protein-lysine N-methyltransferase that monomethylates both histones and non-histone proteins. Specifically monomethylates 'Lys-20' of histone H4 (H4K20me1). H4K20me1 is enriched during mitosis and represents a specific tag for epigenetic transcriptional repression. Mainly functions in euchromatin regions, thereby playing a central role in the silencing of euchromatic genes. Required for cell proliferation, probably by contributing to the maintenance of proper higher-order structure of DNA during mitosis. Involved in chromosome condensation and proper cytokinesis. Nucleosomes are preferred as substrate compared to free histones. Mediates monomethylation of p53/TP53 at 'Lys-382', leading to repress p53/TP53-target genes. Plays a negative role in TGF-beta response regulation and a positive role in cell migration. The sequence is that of N-lysine methyltransferase KMT5A from Xenopus tropicalis (Western clawed frog).